Reading from the N-terminus, the 859-residue chain is Ribose import ATP-binding protein RbsA 1 (859 aa).

Residues 1-351 form a disordered region; that stretch reads MRASLENGDD…AARAPDEASE (351 aa). Residues 1–353 are unknown; it reads MRASLENGDD…RAPDEASEEA (353 aa). Over residues 8–17 the composition is skewed to basic and acidic residues; that stretch reads GDDHDAHRLV. A compositionally biased stretch (basic residues) spans 28-43; it reads RAARRRAFARARRGER. 3 stretches are compositionally biased toward basic and acidic residues: residues 44–80, 89–129, and 137–167; these read RARG…DRRA, RREQ…EEGG, and RERE…EGDR. A compositionally biased stretch (basic residues) spans 168 to 179; that stretch reads RRRRSRDPRRHP. 5 stretches are compositionally biased toward basic and acidic residues: residues 193–214, 239–250, 263–281, 288–301, and 308–323; these read GARE…GARE, RLDGRAVRDRGV, AGGD…RDVR, DSPR…EEVG, and DSGR…REDV. ABC transporter domains are found at residues 358-594 and 607-851; these read LALT…VGRR and RDAA…TSDV. 390-397 lines the ATP pocket; it reads GENGAGKS.

This sequence belongs to the ABC transporter superfamily. Ribose importer (TC 3.A.1.2.1) family. In terms of assembly, the complex is composed of an ATP-binding protein (RbsA), two transmembrane proteins (RbsC) and a solute-binding protein (RbsB).

It localises to the cell inner membrane. The enzyme catalyses D-ribose(out) + ATP + H2O = D-ribose(in) + ADP + phosphate + H(+). Part of the ABC transporter complex RbsABC involved in ribose import. Responsible for energy coupling to the transport system. The chain is Ribose import ATP-binding protein RbsA 1 from Burkholderia pseudomallei (strain 1710b).